A 184-amino-acid polypeptide reads, in one-letter code: MPTPKKGARLGGSASHQKKILSNLAASLFEHGAIKTTDAKAKTLRPYAEKLITKAKSGTVADRRNVLALIPNKDIVAYLFDELAPKFENRAGGYTRIIKLENRKGDNAPMSQISLVLEETVSAEATRAARAAASKQTADEAQVEETPAEEVTEETAAEETTEAAQADEAPAEEAPVEEKKDEEK.

The disordered stretch occupies residues 126-184 (TRAARAAASKQTADEAQVEETPAEEVTEETAAEETTEAAQADEAPAEEAPVEEKKDEEK). A compositionally biased stretch (acidic residues) spans 141-161 (AQVEETPAEEVTEETAAEETT).

Belongs to the bacterial ribosomal protein bL17 family. In terms of assembly, part of the 50S ribosomal subunit. Contacts protein L32.

The polypeptide is Large ribosomal subunit protein bL17 (Corynebacterium efficiens (strain DSM 44549 / YS-314 / AJ 12310 / JCM 11189 / NBRC 100395)).